A 150-amino-acid chain; its full sequence is Small ribosomal subunit protein bS6 (150 aa).

A disordered region spans residues 99–150; sequence GPSAMLQKRDRDDRGERGERGFGGGGFGGGRDREDRPRRGRDREEAATEETF. Composition is skewed to basic and acidic residues over residues 105-118 and 128-144; these read QKRD…RGER and GRDR…REEA.

This sequence belongs to the bacterial ribosomal protein bS6 family.

Its function is as follows. Binds together with bS18 to 16S ribosomal RNA. The chain is Small ribosomal subunit protein bS6 from Azorhizobium caulinodans (strain ATCC 43989 / DSM 5975 / JCM 20966 / LMG 6465 / NBRC 14845 / NCIMB 13405 / ORS 571).